The chain runs to 621 residues: Laccase-2 (621 aa).

A signal peptide spans 1-23 (MMKSFFSAAALLLGLVAPSAVLA). Residues 24 to 48 (APSLPGVPREVTRDLLRPVEERQSS) constitute a propeptide that is removed on maturation. An intrachain disulfide couples Cys-49 to Cys-57. Plastocyanin-like domains lie at 78 to 201 (TRTY…IVVN) and 210 to 367 (IDLG…LPTN). N-linked (GlcNAc...) asparagine glycosylation occurs at Asn-133. The Cu cation site is built by His-138, His-140, His-183, and His-185. 2 disulfide bridges follow: Cys-159–Cys-586 and Cys-343–Cys-377. N-linked (GlcNAc...) asparagine glycans are attached at residues Asn-261, Asn-276, Asn-289, Asn-325, and Asn-334. N-linked (GlcNAc...) asparagine glycans are attached at residues Asn-401, Asn-421, and Asn-441. A Plastocyanin-like 3 domain is found at 430–566 (DKPIVDYVIA…GGLSVQYLER (137 aa)). His-476, His-479, His-481, His-548, Cys-549, His-550, and His-554 together coordinate Cu cation. The propeptide occupies 606 to 621 (KVKKWVGEHPDWYIKN).

Belongs to the multicopper oxidase family. In terms of assembly, monomer. Cu cation is required as a cofactor. Post-translationally, proteolytically processed at both its N-terminus and its C-terminus.

The protein localises to the secreted. The enzyme catalyses 4 hydroquinone + O2 = 4 benzosemiquinone + 2 H2O. Functionally, probably involved in lignin degradation and in the detoxification of lignin-derived products in its natural habitat (herbivorous dung), which is rich in lignin of grasses and straw. Probably involved in melanin synthesis and in perithecia development. The protein is Laccase-2 (LAC2) of Podospora anserina (Pleurage anserina).